Consider the following 365-residue polypeptide: 3-isopropylmalate dehydrogenase (365 aa).

80–93 provides a ligand contact to NAD(+); it reads GPKWADNTGDQRPE. Substrate is bound by residues arginine 100, arginine 110, arginine 138, and aspartate 223. Aspartate 223, aspartate 247, and aspartate 251 together coordinate Mg(2+). 280 to 292 is an NAD(+) binding site; that stretch reads GSAPDIAGQDVAN. The segment at 337-365 is disordered; that stretch reads NEEDASTSAFGREVATRAADSVPQNAPTP.

It belongs to the isocitrate and isopropylmalate dehydrogenases family. LeuB type 1 subfamily. In terms of assembly, homodimer. Requires Mg(2+) as cofactor. The cofactor is Mn(2+).

It localises to the cytoplasm. The enzyme catalyses (2R,3S)-3-isopropylmalate + NAD(+) = 4-methyl-2-oxopentanoate + CO2 + NADH. Its pathway is amino-acid biosynthesis; L-leucine biosynthesis; L-leucine from 3-methyl-2-oxobutanoate: step 3/4. Catalyzes the oxidation of 3-carboxy-2-hydroxy-4-methylpentanoate (3-isopropylmalate) to 3-carboxy-4-methyl-2-oxopentanoate. The product decarboxylates to 4-methyl-2 oxopentanoate. This Salinibacter ruber (strain DSM 13855 / M31) protein is 3-isopropylmalate dehydrogenase.